Consider the following 572-residue polypeptide: Enolase 4 (572 aa).

The segment at 181 to 204 (IEPVPSPVTSPALGKKKGSGKGKK) is disordered. A compositionally biased stretch (basic residues) spans 194-204 (GKKKGSGKGKK). A substrate-binding site is contributed by glutamate 288. Residue lysine 468 is the Proton acceptor of the active site. Lysine 519 lines the substrate pocket.

It belongs to the enolase family.

The enzyme catalyses (2R)-2-phosphoglycerate = phosphoenolpyruvate + H2O. The protein operates within carbohydrate degradation; glycolysis; pyruvate from D-glyceraldehyde 3-phosphate: step 4/5. In Xenopus laevis (African clawed frog), this protein is Enolase 4 (eno4).